The sequence spans 238 residues: Uridylate kinase (238 aa).

Position 12 to 15 (12 to 15 (KLSG)) interacts with ATP. Gly-54 lines the UMP pocket. The ATP site is built by Gly-55 and Arg-59. Residues Asp-74 and 135-142 (TGNPYFTT) each bind UMP. Thr-162, Tyr-168, and Asp-171 together coordinate ATP.

It belongs to the UMP kinase family. In terms of assembly, homohexamer.

The protein localises to the cytoplasm. The catalysed reaction is UMP + ATP = UDP + ADP. It participates in pyrimidine metabolism; CTP biosynthesis via de novo pathway; UDP from UMP (UMPK route): step 1/1. Inhibited by UTP. Its function is as follows. Catalyzes the reversible phosphorylation of UMP to UDP. This Lawsonia intracellularis (strain PHE/MN1-00) protein is Uridylate kinase.